Here is a 336-residue protein sequence, read N- to C-terminus: tRNA N6-adenosine threonylcarbamoyltransferase (336 aa).

Histidine 111 and histidine 115 together coordinate Fe cation. Residues 134–138 (VVSGG), aspartate 167, glycine 180, aspartate 184, and asparagine 272 each bind substrate. Aspartate 300 is a Fe cation binding site.

The protein belongs to the KAE1 / TsaD family. Fe(2+) serves as cofactor.

Its subcellular location is the cytoplasm. It catalyses the reaction L-threonylcarbamoyladenylate + adenosine(37) in tRNA = N(6)-L-threonylcarbamoyladenosine(37) in tRNA + AMP + H(+). Required for the formation of a threonylcarbamoyl group on adenosine at position 37 (t(6)A37) in tRNAs that read codons beginning with adenine. Is involved in the transfer of the threonylcarbamoyl moiety of threonylcarbamoyl-AMP (TC-AMP) to the N6 group of A37, together with TsaE and TsaB. TsaD likely plays a direct catalytic role in this reaction. This Caldicellulosiruptor saccharolyticus (strain ATCC 43494 / DSM 8903 / Tp8T 6331) protein is tRNA N6-adenosine threonylcarbamoyltransferase.